Reading from the N-terminus, the 597-residue chain is Aspartate--tRNA ligase (597 aa).

Glutamate 173 contacts L-aspartate. The aspartate stretch occupies residues 197-200 (QLFK). Position 219 (arginine 219) interacts with L-aspartate. Residues 219-221 (RDE) and glutamine 228 each bind ATP. Histidine 449 provides a ligand contact to L-aspartate. Glutamate 483 provides a ligand contact to ATP. Arginine 490 is a binding site for L-aspartate. ATP is bound at residue 535–538 (GLDR).

This sequence belongs to the class-II aminoacyl-tRNA synthetase family. Type 1 subfamily. In terms of assembly, homodimer.

The protein resides in the cytoplasm. It catalyses the reaction tRNA(Asp) + L-aspartate + ATP = L-aspartyl-tRNA(Asp) + AMP + diphosphate. In terms of biological role, catalyzes the attachment of L-aspartate to tRNA(Asp) in a two-step reaction: L-aspartate is first activated by ATP to form Asp-AMP and then transferred to the acceptor end of tRNA(Asp). In Shewanella pealeana (strain ATCC 700345 / ANG-SQ1), this protein is Aspartate--tRNA ligase.